The primary structure comprises 262 residues: Ornithine carbamoyltransferase (262 aa).

Carbamoyl phosphate contacts are provided by residues 3 to 7 (STRTR), Gln30, Arg54, and 81 to 84 (HPTQ). Residues Asn114, Asp178, and 182–183 (SM) contribute to the L-ornithine site. Carbamoyl phosphate contacts are provided by residues 219 to 222 (HCLP) and Thr247.

Belongs to the aspartate/ornithine carbamoyltransferase superfamily. OTCase family.

Its subcellular location is the cytoplasm. The catalysed reaction is carbamoyl phosphate + L-ornithine = L-citrulline + phosphate + H(+). Its pathway is amino-acid biosynthesis; L-arginine biosynthesis; L-arginine from L-ornithine and carbamoyl phosphate: step 1/3. The sequence is that of Ornithine carbamoyltransferase (argF) from Neisseria cinerea.